We begin with the raw amino-acid sequence, 178 residues long: CDP-diacylglycerol--glycerol-3-phosphate 3-phosphatidyltransferase (178 aa).

Helical transmembrane passes span 5-25, 32-52, 61-81, and 145-165; these read PNYL…LFYI, KLGA…GYIA, FGKM…TIML, and IIYL…LTII.

This sequence belongs to the CDP-alcohol phosphatidyltransferase class-I family.

It is found in the cell membrane. It catalyses the reaction a CDP-1,2-diacyl-sn-glycerol + sn-glycerol 3-phosphate = a 1,2-diacyl-sn-glycero-3-phospho-(1'-sn-glycero-3'-phosphate) + CMP + H(+). It functions in the pathway phospholipid metabolism; phosphatidylglycerol biosynthesis; phosphatidylglycerol from CDP-diacylglycerol: step 1/2. Its function is as follows. This protein catalyzes the committed step to the synthesis of the acidic phospholipids. This chain is CDP-diacylglycerol--glycerol-3-phosphate 3-phosphatidyltransferase (pgsA), found in Rickettsia typhi (strain ATCC VR-144 / Wilmington).